A 159-amino-acid chain; its full sequence is 2-C-methyl-D-erythritol 2,4-cyclodiphosphate synthase (159 aa).

2 residues coordinate a divalent metal cation: Asp8 and His10. Residues 8 to 10 (DVH) and 34 to 35 (HS) contribute to the 4-CDP-2-C-methyl-D-erythritol 2-phosphate site. His42 contributes to the a divalent metal cation binding site. Residues 56–58 (DIG), 100–106 (AQAPKMA), 132–135 (TTTE), Phe139, and Arg142 contribute to the 4-CDP-2-C-methyl-D-erythritol 2-phosphate site.

It belongs to the IspF family. As to quaternary structure, homotrimer. It depends on a divalent metal cation as a cofactor.

It catalyses the reaction 4-CDP-2-C-methyl-D-erythritol 2-phosphate = 2-C-methyl-D-erythritol 2,4-cyclic diphosphate + CMP. The protein operates within isoprenoid biosynthesis; isopentenyl diphosphate biosynthesis via DXP pathway; isopentenyl diphosphate from 1-deoxy-D-xylulose 5-phosphate: step 4/6. Involved in the biosynthesis of isopentenyl diphosphate (IPP) and dimethylallyl diphosphate (DMAPP), two major building blocks of isoprenoid compounds. Catalyzes the conversion of 4-diphosphocytidyl-2-C-methyl-D-erythritol 2-phosphate (CDP-ME2P) to 2-C-methyl-D-erythritol 2,4-cyclodiphosphate (ME-CPP) with a corresponding release of cytidine 5-monophosphate (CMP). The chain is 2-C-methyl-D-erythritol 2,4-cyclodiphosphate synthase from Marinobacter nauticus (strain ATCC 700491 / DSM 11845 / VT8) (Marinobacter aquaeolei).